Consider the following 308-residue polypeptide: 3'(2'),5'-bisphosphate nucleotidase 1 (308 aa).

At Ala-2 the chain carries N-acetylalanine. Catalysis depends on Asp-51, which acts as the Proton acceptor. Residues Glu-74, Asp-117, Leu-119, and Asp-120 each contribute to the Mg(2+) site. Thr-122 functions as the Proton acceptor in the catalytic mechanism. Residue Thr-122 is modified to Phosphothreonine. Positions 195, 198, 220, and 224 each coordinate AMP. At Ser-240 the chain carries Phosphoserine. Lys-244 carries the post-translational modification N6-succinyllysine. Asp-247 contacts Mg(2+).

This sequence belongs to the inositol monophosphatase superfamily. The cofactor is Mg(2+). In terms of tissue distribution, widely expressed. Highly expressed in kidney.

The catalysed reaction is adenosine 3',5'-bisphosphate + H2O = AMP + phosphate. The enzyme catalyses adenosine 2',5'-bisphosphate + H2O = AMP + phosphate. It catalyses the reaction 3'-phosphoadenylyl sulfate + H2O = adenosine 5'-phosphosulfate + phosphate. It carries out the reaction 1D-myo-inositol 1,4-bisphosphate + H2O = 1D-myo-inositol 4-phosphate + phosphate. The catalysed reaction is 1D-myo-inositol 1,3,4-trisphosphate + H2O = 1D-myo-inositol 3,4-bisphosphate + phosphate. Its activity is regulated as follows. Uncompetitively inhibited by Li(+) (IC(50)=157 uM). PAP hydrolysis is competitively inhibited by PAPS (IC(50)=0.7 uM) and by inositol 1,4-bisphosphate (IC(50)=15 uM). Phosphatase that converts 3'(2')-phosphoadenosine 5'-phosphate (PAP) to AMP and adenosine 3'-phosphate 5'-phosphosulfate (PAPS) to adenosine 5'-phosphosulfate (APS). Is also able to hydrolyze inositol 1,4-bisphosphate (Ins(1,4)P2) and inositol 1,3,4-trisphosphate (Ins(1,3,4)P3), and is not active on Ins(1)P, Ins(4)P, Ins(3,4)P2, Ins(1,4,5)P3, Ins(1,3,4,5)P4, Ins(1,3,4,5,6)P5 or InsP6. Probably prevents the toxic accumulation of PAP, a compound which inhibits a variety of proteins, including PAPS-utilizing enzymes such as sulfotransferases, and RNA processing enzymes. Could also play a role in inositol recycling and phosphoinositide metabolism. The polypeptide is 3'(2'),5'-bisphosphate nucleotidase 1 (Bpnt1) (Mus musculus (Mouse)).